The primary structure comprises 261 residues: Indole-3-glycerol phosphate synthase (261 aa).

It belongs to the TrpC family.

It catalyses the reaction 1-(2-carboxyphenylamino)-1-deoxy-D-ribulose 5-phosphate + H(+) = (1S,2R)-1-C-(indol-3-yl)glycerol 3-phosphate + CO2 + H2O. It functions in the pathway amino-acid biosynthesis; L-tryptophan biosynthesis; L-tryptophan from chorismate: step 4/5. In Burkholderia pseudomallei (strain 1710b), this protein is Indole-3-glycerol phosphate synthase.